A 298-amino-acid chain; its full sequence is Probable D,D-dipeptide transport system permease protein DdpC (298 aa).

The Cytoplasmic segment spans residues 1 to 33; the sequence is MMLSEETSAVRPQKQTRFNGAKLVWMLKGSPLT. A helical transmembrane segment spans residues 34–54; that stretch reads VTSAVIIVLMLLMMIFSPWLA. Topologically, residues 55–96 are periplasmic; sequence THDPNAIDLTARLLPPSAAHWFGTDEVGRDLFSRVLVGSQQS. A helical membrane pass occupies residues 97-117; the sequence is ILAGLVVVAIAGMIGSLLGCL. The ABC transmembrane type-1 domain occupies 97-282; it reads ILAGLVVVAI…LTAVGFNLFG (186 aa). At 118–124 the chain is on the cytoplasmic side; it reads SGVLGGR. 2 consecutive transmembrane segments (helical) span residues 125–145 and 146–166; these read ADAI…LVLT and MALA…IAIV. The Cytoplasmic portion of the chain corresponds to 167–217; that stretch reads RIPFYVRLARGQALVVRQYTYVQAAKTFGASRWHLINWHILRNSLPPLIVQ. A helical membrane pass occupies residues 218 to 238; sequence ASLDIGSAILMAATLGFIGLG. Residues 239–260 lie on the Periplasmic side of the membrane; the sequence is AQQPSAEWGAMVANGRNYVLDQ. The chain crosses the membrane as a helical span at residues 261 to 281; the sequence is WWYCAFPGAAILLTAVGFNLF. At 282–298 the chain is on the cytoplasmic side; sequence GDGIRDLLDPKAGGKQS.

The protein belongs to the binding-protein-dependent transport system permease family. OppBC subfamily. As to quaternary structure, the complex is composed of two ATP-binding proteins (DdpD and DdpF), two transmembrane proteins (DdpB and DdpC) and a solute-binding protein (DdpA).

It localises to the cell inner membrane. In terms of biological role, part of the ABC transporter complex DdpABCDF, which is probably involved in D,D-dipeptide transport. Probably responsible for the translocation of the substrate across the membrane. The sequence is that of Probable D,D-dipeptide transport system permease protein DdpC (ddpC) from Escherichia coli (strain K12).